A 197-amino-acid polypeptide reads, in one-letter code: Nucleoid occlusion factor SlmA (197 aa).

The region spanning 7 to 67 is the HTH tetR-type domain; sequence INRREHILQC…GLIDFIEESL (61 aa). A DNA-binding region (H-T-H motif) is located at residues 30–49; the sequence is TTAKLAAEVGVSEAALYRHF.

This sequence belongs to the nucleoid occlusion factor SlmA family. In terms of assembly, homodimer. Interacts with FtsZ.

The protein localises to the cytoplasm. It localises to the nucleoid. Functionally, required for nucleoid occlusion (NO) phenomenon, which prevents Z-ring formation and cell division over the nucleoid. Acts as a DNA-associated cell division inhibitor that binds simultaneously chromosomal DNA and FtsZ, and disrupts the assembly of FtsZ polymers. SlmA-DNA-binding sequences (SBS) are dispersed on non-Ter regions of the chromosome, preventing FtsZ polymerization at these regions. The polypeptide is Nucleoid occlusion factor SlmA (Shewanella woodyi (strain ATCC 51908 / MS32)).